The primary structure comprises 225 residues: Ribonuclease 3 (225 aa).

In terms of domain architecture, RNase III spans methionine 7–glycine 129. A Mg(2+)-binding site is contributed by glutamate 42. Residue aspartate 46 is part of the active site. Mg(2+) contacts are provided by aspartate 115 and glutamate 118. Residue glutamate 118 is part of the active site. The 71-residue stretch at aspartate 155–arginine 225 folds into the DRBM domain.

It belongs to the ribonuclease III family. In terms of assembly, homodimer. Mg(2+) serves as cofactor.

The protein resides in the cytoplasm. It catalyses the reaction Endonucleolytic cleavage to 5'-phosphomonoester.. Digests double-stranded RNA. Involved in the processing of primary rRNA transcript to yield the immediate precursors to the large and small rRNAs (23S and 16S). Processes some mRNAs, and tRNAs when they are encoded in the rRNA operon. Processes pre-crRNA and tracrRNA of type II CRISPR loci if present in the organism. In Shewanella sediminis (strain HAW-EB3), this protein is Ribonuclease 3.